The primary structure comprises 387 residues: Acetylserotonin O-methyltransferase (387 aa).

S-adenosyl-L-methionine is bound by residues Tyr-153, Trp-170, Glu-216, 246–248 (GDF), and Arg-263. Residue His-266 is the Proton donor/acceptor of the active site. The substrate site is built by Asp-267 and Gln-317. The interval 354 to 387 (AARGGGAGARSDGGGGDATSQTGSGTGSEVGAQD) is disordered. Positions 356 to 370 (RGGGAGARSDGGGGD) are enriched in gly residues.

This sequence belongs to the class I-like SAM-binding methyltransferase superfamily. Cation-independent O-methyltransferase family. Homodimer. As to expression, expressed predominantly in the pineal gland (at protein level). Very low expression, if any, in the retina.

The enzyme catalyses N-acetylserotonin + S-adenosyl-L-methionine = melatonin + S-adenosyl-L-homocysteine + H(+). The protein operates within aromatic compound metabolism; melatonin biosynthesis; melatonin from serotonin: step 1/2. Catalyzes the transfer of a methyl group onto N-acetylserotonin, producing melatonin (N-acetyl-5-methoxytryptamine). This is Acetylserotonin O-methyltransferase (Asmt) from Mus musculus (Mouse).